The sequence spans 256 residues: Alcohol dehydrogenase (256 aa).

12-35 serves as a coordination point for NAD(+); it reads FVAGLGGIGLDTSREIVKAGPKNL. S140 contacts substrate. The active-site Proton acceptor is Y153.

Belongs to the short-chain dehydrogenases/reductases (SDR) family. In terms of assembly, homodimer.

The enzyme catalyses a primary alcohol + NAD(+) = an aldehyde + NADH + H(+). It carries out the reaction a secondary alcohol + NAD(+) = a ketone + NADH + H(+). This is Alcohol dehydrogenase (Adh) from Zaprionus tuberculatus (Vinegar fly).